The chain runs to 372 residues: Flap endonuclease 1 (372 aa).

The tract at residues 1–105 is N-domain; that stretch reads MGVKGLNQLI…GELEKRLLRR (105 aa). D34 serves as a coordination point for Mg(2+). DNA contacts are provided by R47 and R71. Residues D87, E159, E161, D180, and D182 each coordinate Mg(2+). The interval 123–254 is I-domain; the sequence is EVLKFEKRLV…ATAFKLIKEH (132 aa). Position 159 (E159) interacts with DNA. DNA-binding residues include G232 and D234. D234 is a binding site for Mg(2+). Residues 339-347 form an interaction with PCNA region; the sequence is VQGRLDGFF.

It belongs to the XPG/RAD2 endonuclease family. FEN1 subfamily. As to quaternary structure, interacts with PCNA. Three molecules of RAD27 bind to one PCNA trimer with each molecule binding to one PCNA monomer. PCNA stimulates the nuclease activity without altering cleavage specificity. Mg(2+) serves as cofactor. In terms of processing, phosphorylated. Phosphorylation upon DNA damage induces relocalization to the nuclear plasma.

The protein localises to the nucleus. The protein resides in the nucleolus. It localises to the nucleoplasm. Its subcellular location is the mitochondrion. In terms of biological role, structure-specific nuclease with 5'-flap endonuclease and 5'-3' exonuclease activities involved in DNA replication and repair. During DNA replication, cleaves the 5'-overhanging flap structure that is generated by displacement synthesis when DNA polymerase encounters the 5'-end of a downstream Okazaki fragment. It enters the flap from the 5'-end and then tracks to cleave the flap base, leaving a nick for ligation. Also involved in the long patch base excision repair (LP-BER) pathway, by cleaving within the apurinic/apyrimidinic (AP) site-terminated flap. Acts as a genome stabilization factor that prevents flaps from equilibrating into structures that lead to duplications and deletions. Also possesses 5'-3' exonuclease activity on nicked or gapped double-stranded DNA, and exhibits RNase H activity. Also involved in replication and repair of rDNA and in repairing mitochondrial DNA. The protein is Flap endonuclease 1 of Candida dubliniensis (strain CD36 / ATCC MYA-646 / CBS 7987 / NCPF 3949 / NRRL Y-17841) (Yeast).